A 303-amino-acid chain; its full sequence is MSARMVIVTGLSGAGRNSVLRALEDIGYEAVDNPPLRIVETLVRGDKPLAVGVDARTRDFSAEDVLSTIDRLQTRGCVRPELIFITASPEALQRRFSETRRRHPLALAGTVSEGIETEQALTRTLRNAADWVIDTSELSLAGLRQIIDQRFGLGGPGMSITLVSFGYPSGLPQEADLVLDTRFLRNPHYIPDLRDRTGLDPQVRDYIRQDPDFPEFFERVSGLTDYLLPRFVREGKKYVMIAFGCTGGKHRSVSLVEMLGSRLRNADWNVLIEHRSLGSRSVGGAWKAMPGAHQGAPMPGVQK.

An ATP-binding site is contributed by 10–17 (GLSGAGRN). 54–57 (DART) contacts GTP.

It belongs to the RapZ-like family.

Displays ATPase and GTPase activities. The polypeptide is Nucleotide-binding protein Acry_0446 (Acidiphilium cryptum (strain JF-5)).